A 198-amino-acid polypeptide reads, in one-letter code: Undecaprenyl phosphate transporter A (198 aa).

A run of 5 helical transmembrane segments spans residues Met15–Leu35, Ile47–Ile67, Val107–Ile127, Phe135–Ile155, and Gly169–Ile189.

The protein belongs to the DedA family.

It is found in the cell membrane. Functionally, flippase that catalyzes the transport of undecaprenyl phosphate (UndP) across the cytoplasmic membrane, from the external side to the cytoplasmic side. Is involved in UndP recycling during peptidoglycan synthesis. This Bacillus subtilis (strain 168) protein is Undecaprenyl phosphate transporter A.